A 368-amino-acid polypeptide reads, in one-letter code: MTRPFNFSAGPANLPEEVLQQAAAEMLDWHGSGMSVMEMSHRGKEFISIYENAEADFRELMAIPPNFKILFMQGGGLAENAIVPLNLSRGASADFVVTGSWSDKSQKEARKYCDVQIAATNAGSDHTQLPPPASWNLRRDASYVHVCTNETIHGVEFQELPDIKTLGSDAPLVIDFSSHVASRPVDWSRVGLAFGGAQKNLGPAGVTLVVVREDLMGHALPACPSAFDYKTVADNHSMYNTPPTYAIYIAGLTFQWLKRQKEGDVTGIAAMEKRNLAKAQLLYDAIDRSQLYFNRVGSECRSRMNVPFLLRDESRNEAFLAGAKAHSLLQLKGHKSVGGMRASIYNAMPLAGIEALIGYMREFEQKHA.

R42 provides a ligand contact to L-glutamate. Positions 101, 151, 175, and 198 each coordinate pyridoxal 5'-phosphate. K199 bears the N6-(pyridoxal phosphate)lysine mark. Pyridoxal 5'-phosphate is bound at residue 240–241 (NT).

The protein belongs to the class-V pyridoxal-phosphate-dependent aminotransferase family. SerC subfamily. In terms of assembly, homodimer. Requires pyridoxal 5'-phosphate as cofactor.

The protein resides in the cytoplasm. It carries out the reaction O-phospho-L-serine + 2-oxoglutarate = 3-phosphooxypyruvate + L-glutamate. The catalysed reaction is 4-(phosphooxy)-L-threonine + 2-oxoglutarate = (R)-3-hydroxy-2-oxo-4-phosphooxybutanoate + L-glutamate. It participates in amino-acid biosynthesis; L-serine biosynthesis; L-serine from 3-phospho-D-glycerate: step 2/3. The protein operates within cofactor biosynthesis; pyridoxine 5'-phosphate biosynthesis; pyridoxine 5'-phosphate from D-erythrose 4-phosphate: step 3/5. Catalyzes the reversible conversion of 3-phosphohydroxypyruvate to phosphoserine and of 3-hydroxy-2-oxo-4-phosphonooxybutanoate to phosphohydroxythreonine. This Polaromonas sp. (strain JS666 / ATCC BAA-500) protein is Phosphoserine aminotransferase.